We begin with the raw amino-acid sequence, 412 residues long: Sulfhydrogenase 2 subunit alpha (412 aa).

Cysteine 60, cysteine 63, cysteine 402, and cysteine 405 together coordinate Ni(2+). Cysteine 63 contacts Fe cation. Residue cysteine 405 participates in Fe cation binding.

It belongs to the [NiFe]/[NiFeSe] hydrogenase large subunit family. Dimer of heterotetramer of alpha, beta, gamma and delta subunits. The nickel-containing alpha and delta subunits constitute the hydrogenase activity. The beta and gamma subunits (flavin-containing dimer) constitute the sulfur reductase activity. Ni(2+) serves as cofactor. Requires Fe cation as cofactor.

It is found in the cytoplasm. It carries out the reaction H2 + NADP(+) = NADPH + H(+). The catalysed reaction is H2 + NAD(+) = NADH + H(+). Functionally, part of a bifunctional enzyme complex that functions as a hydrogen-evolving hydrogenase with sulfur-reducing activity. May play a role in hydrogen cycling during fermentative growth. Activity exhibited with NAD in addition to NADPH. The alpha and delta subunits form the hydrogenase component that catalyzes the reduction of protons to evolve hydrogen. The protein is Sulfhydrogenase 2 subunit alpha of Pyrococcus furiosus (strain ATCC 43587 / DSM 3638 / JCM 8422 / Vc1).